The primary structure comprises 434 residues: 3-phosphoshikimate 1-carboxyvinyltransferase (434 aa).

The 3-phosphoshikimate site is built by K22, S23, and R27. K22 is a binding site for phosphoenolpyruvate. The phosphoenolpyruvate site is built by G93 and R121. Residues S168, S169, Q170, S199, D320, and K347 each coordinate 3-phosphoshikimate. Q170 is a phosphoenolpyruvate binding site. D320 serves as the catalytic Proton acceptor. The phosphoenolpyruvate site is built by R351, R394, and K419.

The protein belongs to the EPSP synthase family. Monomer.

It is found in the cytoplasm. It catalyses the reaction 3-phosphoshikimate + phosphoenolpyruvate = 5-O-(1-carboxyvinyl)-3-phosphoshikimate + phosphate. It participates in metabolic intermediate biosynthesis; chorismate biosynthesis; chorismate from D-erythrose 4-phosphate and phosphoenolpyruvate: step 6/7. Functionally, catalyzes the transfer of the enolpyruvyl moiety of phosphoenolpyruvate (PEP) to the 5-hydroxyl of shikimate-3-phosphate (S3P) to produce enolpyruvyl shikimate-3-phosphate and inorganic phosphate. This chain is 3-phosphoshikimate 1-carboxyvinyltransferase, found in Burkholderia ambifaria (strain ATCC BAA-244 / DSM 16087 / CCUG 44356 / LMG 19182 / AMMD) (Burkholderia cepacia (strain AMMD)).